We begin with the raw amino-acid sequence, 528 residues long: Cytochrome P450 monooxygenase lenC (528 aa).

Residues 5–27 form a helical membrane-spanning segment; sequence FVLPHPASMGASCILGLLLLTIL. Cysteine 469 contributes to the heme binding site.

It belongs to the cytochrome P450 family. Heme serves as cofactor.

The protein localises to the membrane. The protein operates within alkaloid biosynthesis. Its function is as follows. Nonribosomal peptide synthetase; part of the gene cluster that mediates the biosynthesis of the ergot alkaloids lentopeptins A and B. Within the pathway, lenC catalyzes the post-NRPS oxidative modification steps using as substrate the N-acyldiketopiperazine intermediate produced by the NRPS lenA. Lentopeptin A forms via a stereospecific hydroxylation, followed by a spontaneous bicyclic lactam core formation, while lentopeptin B is produced through an initial dehydrogenation, followed by a bicyclic lactam core formation and stereospecific hydration. The phenylalanine ammonia-lyase lenB provides the cinnamic acid starter unit to the NRPS lenA for the synthesis of the N-acyldiketopiperazine intermediate which in turn is converted into lentopeptins A and B by lenC. This Aspergillus lentulus protein is Cytochrome P450 monooxygenase lenC.